The chain runs to 339 residues: uncharacterized protein (339 aa).

One can recognise a Rhodanese domain in the interval 17 to 111; sequence VRGEIKCLDV…WEDLSLPQNE (95 aa).

This is an uncharacterized protein from Schizosaccharomyces pombe (strain 972 / ATCC 24843) (Fission yeast).